Consider the following 329-residue polypeptide: Apolipoprotein E (329 aa).

The N-terminal stretch at 1 to 18 (MKVLWAALVVALLAGCWA) is a signal peptide. 8 tandem repeats follow at residues 92 to 113 (TLME…EQLG), 114 to 135 (PMAS…ARLR), 136 to 157 (SDME…AMLG), 158 to 179 (QSTE…KRVL), 180 to 201 (RDAE…EGAE), 202 to 223 (RSVS…TRHA), 224 to 245 (KVDA…QQLR), and 246 to 267 (GRLE…EQME). The segment at 92-267 (TLMEETMKEI…HLDEVREQME (176 aa)) is 8 X 22 AA approximate tandem repeats. Methionine 155 bears the Methionine sulfoxide mark. Phosphoserine is present on serine 159. Residues 170-180 (HMRKLRKRVLR) are LDL and other lipoprotein receptors binding. 174–177 (LRKR) serves as a coordination point for heparin. A lipid-binding and lipoprotein association region spans residues 222–302 (HAKVDALATQ…GWFEPLVEDM (81 aa)). 241–248 (GQQLRGRL) is a heparin binding site. The homooligomerization stretch occupies residues 278-329 (NQMRQQAEPFQARLKGWFEPLVEDMQRQWAVLVEKVQAAVGTSPTTPPVETK). Residues 290 to 302 (RLKGWFEPLVEDM) form a specificity for association with VLDL region.

It belongs to the apolipoprotein A1/A4/E family. As to quaternary structure, homotetramer. May interact with ABCA1; functionally associated with ABCA1 in the biogenesis of HDLs. May interact with APP/A4 amyloid-beta peptide; the interaction is extremely stable in vitro but its physiological significance is unclear. May interact with MAPT. May interact with MAP2. In the cerebrospinal fluid, interacts with secreted SORL1. Interacts with PMEL; this allows the loading of PMEL luminal fragment on ILVs to induce fibril nucleation. APOE exists as multiple glycosylated and sialylated glycoforms within cells and in plasma. The extent of glycosylation and sialylation are tissue and context specific. In terms of processing, glycated in plasma VLDL. Post-translationally, phosphorylated by FAM20C in the extracellular medium.

The protein localises to the secreted. It localises to the extracellular space. The protein resides in the extracellular matrix. Its subcellular location is the extracellular vesicle. It is found in the endosome. The protein localises to the multivesicular body. Functionally, APOE is an apolipoprotein, a protein associating with lipid particles, that mainly functions in lipoprotein-mediated lipid transport between organs via the plasma and interstitial fluids. APOE is a core component of plasma lipoproteins and is involved in their production, conversion and clearance. Apolipoproteins are amphipathic molecules that interact both with lipids of the lipoprotein particle core and the aqueous environment of the plasma. As such, APOE associates with chylomicrons, chylomicron remnants, very low density lipoproteins (VLDL) and intermediate density lipoproteins (IDL) but shows a preferential binding to high-density lipoproteins (HDL). It also binds a wide range of cellular receptors including the LDL receptor/LDLR, the LDL receptor-related proteins LRP1, LRP2 and LRP8 and the very low-density lipoprotein receptor/VLDLR that mediate the cellular uptake of the APOE-containing lipoprotein particles. Finally, APOE also has a heparin-binding activity and binds heparan-sulfate proteoglycans on the surface of cells, a property that supports the capture and the receptor-mediated uptake of APOE-containing lipoproteins by cells. A main function of APOE is to mediate lipoprotein clearance through the uptake of chylomicrons, VLDLs, and HDLs by hepatocytes. APOE is also involved in the biosynthesis by the liver of VLDLs as well as their uptake by peripheral tissues ensuring the delivery of triglycerides and energy storage in muscle, heart and adipose tissues. By participating in the lipoprotein-mediated distribution of lipids among tissues, APOE plays a critical role in plasma and tissues lipid homeostasis. APOE is also involved in two steps of reverse cholesterol transport, the HDLs-mediated transport of cholesterol from peripheral tissues to the liver, and thereby plays an important role in cholesterol homeostasis. First, it is functionally associated with ABCA1 in the biogenesis of HDLs in tissues. Second, it is enriched in circulating HDLs and mediates their uptake by hepatocytes. APOE also plays an important role in lipid transport in the central nervous system, regulating neuron survival and sprouting. This chain is Apolipoprotein E (APOE), found in Arctocephalus gazella (Antarctic fur seal).